The primary structure comprises 438 residues: MYHDYASKLLADYRSDPPLWESDLPRHNRYSDNILNSRYCGNKNGAAPVYNEYTNSPGQAEKGLQLSDLRNFSFMLNPQHKNIGYGDAQDLEPYSSIPKNKLFNHFKNYRPAFSTHTENLIKRNVVRTEKKTFPQVSGLKDTQKNCLTQPSSLPSLKNPKNSSVPSTRFSEHTKFFSYEDLPKLRTKGTIKHEQHLGDQMPGQCYNGYIPHQDVYNILCLAHKLPASVEKEIAGRGIPLGNPHVKPNIEQELIKSTSTYTGVPILGPLPPKDSQHGREHQEFSANRHMLQVSNILHSVFANHSIKPQILEDIPVLNAQLASIKPVSPFLNKAYQTHYMENIVTLVPRFKSIANYSSPIPNYSKRNNGQAEYFDTSKQTISRHNNYIPKYTGGIGDSKLDSTFPKDFNASSVPLTSAEKDHSLRGDNSACCISSISPSL.

Residues 134–167 (PQVSGLKDTQKNCLTQPSSLPSLKNPKNSSVPST) are disordered. Residues 144–167 (KNCLTQPSSLPSLKNPKNSSVPST) are compositionally biased toward polar residues.

This sequence belongs to the asfivirus p49 structural protein family.

The protein resides in the virion. Together with the penton and the other minor capsid proteins (M1249L, p17), forms a complicated network immediately below the outer capsid shell, stabilizing the whole capsid. Plays an essential role in the formation of infectious virus particles. Especially required for the formation of the capsid vertices. During virion assembly, associates with the membrane and probably mediates the docking of the penton complex to the inner membrane, where it recruits the capsomers to form the penton core. The protein is Minor capsid protein p49 of Ornithodoros (relapsing fever ticks).